The primary structure comprises 237 residues: Cysteine-rich venom protein tigrin (237 aa).

Residues 1-18 (MIVFILLSLAAVLRQSFG) form the signal peptide. Residues 37-165 (VNIHNSFRRS…LYNYFYVCQY (129 aa)) enclose the SCP domain. Cystine bridges form between C74/C152, C91/C166, C147/C163, C185/C192, C188/C197, C201/C232, C210/C226, and C217/C230. The ShKT domain maps to 201–232 (CTHKDDYNNCNSLVSDCQSDWDKSHCPATCFC).

Belongs to the CRISP family. As to expression, expressed by the venom gland.

The protein resides in the secreted. In terms of biological role, this protein does not inhibit smooth muscle contraction elicited by high potassium levels or caffeine. In Rhabdophis tigrinus tigrinus (Tiger keelback snake), this protein is Cysteine-rich venom protein tigrin.